Reading from the N-terminus, the 382-residue chain is Protein farnesyltransferase subunit beta (382 aa).

PFTB repeat units follow at residues 78–119, 129–170, 178–219, 226–268, and 286–328; these read CERA…CLCD, RDRL…SLVG, FEGT…ALLG, EIKL…VIVA, and PEKL…SSIA. Residues 204-207 and 247-250 each bind (2E,6E)-farnesyl diphosphate; these read HGGY and RSNK. Zn(2+) contacts are provided by D253 and C255. Residue 256 to 259 coordinates (2E,6E)-farnesyl diphosphate; the sequence is YSWW. H316 lines the Zn(2+) pocket.

Belongs to the protein prenyltransferase subunit beta family. In terms of assembly, heterodimer of an alpha(cwp1) and a beta(cpp1) subunit. Zn(2+) serves as cofactor.

It carries out the reaction L-cysteinyl-[protein] + (2E,6E)-farnesyl diphosphate = S-(2E,6E)-farnesyl-L-cysteinyl-[protein] + diphosphate. Functionally, catalyzes the transfer of a farnesyl moiety from farnesyl diphosphate to a cysteine at the fourth position from the C-terminus of several proteins. The beta(cpp1) subunit is responsible for peptide-binding. The chain is Protein farnesyltransferase subunit beta (cpp1) from Schizosaccharomyces pombe (strain 972 / ATCC 24843) (Fission yeast).